Consider the following 416-residue polypeptide: L-lysine 2,3-aminomutase (416 aa).

In terms of domain architecture, Radical SAM core spans 111-322; that stretch reads HRYPDRVLLL…EGLRGHTSGY (212 aa). [4Fe-4S] cluster contacts are provided by cysteine 125, cysteine 129, and cysteine 132. Residue cysteine 268 coordinates Zn(2+). Lysine 337 is modified (N6-(pyridoxal phosphate)lysine). Residues cysteine 375, cysteine 377, and cysteine 380 each contribute to the Zn(2+) site.

It belongs to the radical SAM superfamily. KamA family. Homohexamer; trimer of dimers. Forms a homotetramer in crystal. It depends on [4Fe-4S] cluster as a cofactor. Pyridoxal 5'-phosphate is required as a cofactor. The cofactor is Co(2+). Zn(2+) serves as cofactor.

The catalysed reaction is L-lysine = (3S)-3,6-diaminohexanoate. Its pathway is amino-acid degradation; L-lysine degradation via acetate pathway. The enzyme is activated by S-adenosyl-methionine. Activity is dependent on the levels of Fe(2+), S(2-) and Co(2+). Activity is stimulated by addition of EDTA. S-adenosylhomocysteine competitively inhibits the activity whereas 5'-methylthioadenosine is not inhibitory in the presence of S-adenosylmethionine. Competitively inhibited by 4-thialysine. Inhibited by sodium borohydride (1 mM) when added with 2 mM dithionate. Moderately inhibited by beta-mercaptoethanol (30 mM) along with dithionate. Higher concentrations of Fe(2+) partially inhibit the activity and Co(2+) at 1 mM is a strong inhibitor. Hydroxylamine, isonicotinic acid hydrazide inhibit effectively, in addition, hydrazine, D-penicillamine and D-cycloserine are also inhibitory at high concentrations. Its function is as follows. Catalyzes the interconversion of L-alpha-lysine and L-beta-lysine. This Clostridium subterminale protein is L-lysine 2,3-aminomutase (kamA).